The primary structure comprises 586 residues: Major facilitator superfamily domain-containing protein 6-like (586 aa).

Helical transmembrane passes span 50–70 and 78–98; these read ILMGTKHLIATCWIPFCAFLA and MFLTGSLLSSAGASLLMVLVP. Residues 218-237 are disordered; the sequence is GPVNLSKPQGDTQTPDHSSK. A compositionally biased stretch (polar residues) spans 223 to 237; the sequence is SKPQGDTQTPDHSSK. 9 helical membrane-spanning segments follow: residues 240-260, 284-304, 318-338, 365-385, 397-417, 428-448, 454-474, 494-514, and 519-538; these read PWTFILSLGVVVFWELLAAPL, LWVWKLLGVSAGVCGIAALVG, VIYFYSYSLVSTLALAVSTAF, LILLAFTVFWIGATASTVQDF, ELVMGFSVALSLLGEILFHPF, VGVLGLGLGCLALQVLYYAFI, VLPVQILSTISSGALWWAVGA, GHFYGSGCSLGSFVGGFVVLH, and VLYEACCVVLLLWLALFLSI.

This sequence belongs to the major facilitator superfamily. MFSD6 family.

It localises to the membrane. This Mus musculus (Mouse) protein is Major facilitator superfamily domain-containing protein 6-like (Mfsd6l).